The following is a 178-amino-acid chain: RNA pyrophosphohydrolase (178 aa).

In terms of domain architecture, Nudix hydrolase spans 18 to 171 (PYRPCVGLMV…KRKVYEQVVA (154 aa)). The Nudix box motif lies at 59–80 (GGIDKGEDPAQAALRELYEETG).

This sequence belongs to the Nudix hydrolase family. RppH subfamily. It depends on a divalent metal cation as a cofactor.

Its function is as follows. Accelerates the degradation of transcripts by removing pyrophosphate from the 5'-end of triphosphorylated RNA, leading to a more labile monophosphorylated state that can stimulate subsequent ribonuclease cleavage. This chain is RNA pyrophosphohydrolase, found in Brucella melitensis biotype 2 (strain ATCC 23457).